Reading from the N-terminus, the 415-residue chain is Probable beta-1,4-xylosyltransferase IRX10L (415 aa).

Met1 is a topological domain (cytoplasmic). The chain crosses the membrane as a helical; Signal-anchor for type II membrane protein span at residues 2-22; sequence KLSSCVLIFLLCNTFSSISAF. Residues 23–415 are Lumenal-facing; the sequence is RLSRSQPTER…AGPVADLKPW (393 aa). Residues Asn142 and Asn403 are each glycosylated (N-linked (GlcNAc...) asparagine).

This sequence belongs to the glycosyltransferase 47 family. Present in the xylem and phloem, and, to a lower extent, in interfascicular cells. Expressed in the root tip, shoot apical meristem (SAM), xylem cells of roots and stems, and in the vasculature of roots, cotyledons and leaves.

It is found in the golgi apparatus membrane. In terms of biological role, involved in the synthesis of the hemicellulose glucuronoxylan, a major component of secondary cell walls. Probably involved in the elongation of glucuronoxylan xylosyl backbone. The sequence is that of Probable beta-1,4-xylosyltransferase IRX10L (IRX10L) from Arabidopsis thaliana (Mouse-ear cress).